Consider the following 233-residue polypeptide: uncharacterized protein (233 aa).

The protein belongs to the RHS family.

This is an uncharacterized protein from Escherichia coli (strain K12).